The sequence spans 134 residues: MSVTRGSAGDLRKGSYVILDDEPCEVLEVSKSKPGKHGSAKVRVEARGIFDGARRSKIFPADALVEIPIVDKKTAQVINVYGNVVQLMDLETYETFELPLPEDPELASRLKSGIEVEYWESMGKRKIVRTRGGV.

K36 bears the Hypusine mark.

The protein belongs to the eIF-5A family.

It localises to the cytoplasm. In terms of biological role, functions by promoting the formation of the first peptide bond. The protein is Translation initiation factor 5A (eIF5A) of Korarchaeum cryptofilum (strain OPF8).